The sequence spans 317 residues: Ribose-phosphate pyrophosphokinase (317 aa).

ATP is bound by residues 43–45 (DGE) and 102–103 (RQ). Mg(2+) is bound by residues His-136 and Asp-175. Lys-198 is an active-site residue. Residues Arg-200, Asp-224, and 228–232 (DTAGT) contribute to the D-ribose 5-phosphate site.

It belongs to the ribose-phosphate pyrophosphokinase family. Class I subfamily. In terms of assembly, homohexamer. It depends on Mg(2+) as a cofactor.

It localises to the cytoplasm. The catalysed reaction is D-ribose 5-phosphate + ATP = 5-phospho-alpha-D-ribose 1-diphosphate + AMP + H(+). Its pathway is metabolic intermediate biosynthesis; 5-phospho-alpha-D-ribose 1-diphosphate biosynthesis; 5-phospho-alpha-D-ribose 1-diphosphate from D-ribose 5-phosphate (route I): step 1/1. Its function is as follows. Involved in the biosynthesis of the central metabolite phospho-alpha-D-ribosyl-1-pyrophosphate (PRPP) via the transfer of pyrophosphoryl group from ATP to 1-hydroxyl of ribose-5-phosphate (Rib-5-P). The chain is Ribose-phosphate pyrophosphokinase from Corynebacterium ammoniagenes (Brevibacterium ammoniagenes).